Consider the following 848-residue polypeptide: Coiled-coil and C2 domain-containing protein 1B (848 aa).

Basic residues predominate over residues 1 to 10 (MPGPRPRKGP). Disordered stretches follow at residues 1–21 (MPGP…ETAK) and 53–75 (ALTG…PLPM). The stretch at 165 to 193 (LQALLEERIRNYREAAASAKEAGEAAKAR) forms a coiled coil. 4 disordered regions span residues 217-276 (EDEI…DPDP), 326-353 (VDLS…ATQG), 433-460 (DFAE…QDSV), and 476-523 (ALVD…SPSV). Residues 438–448 (PVPPGFPPIPG) are compositionally biased toward pro residues. Ser455 bears the Phosphoserine mark. Over residues 476–485 (ALVDDDEESD) the composition is skewed to acidic residues. Composition is skewed to low complexity over residues 487-498 (PAQAPLAKKPAQ) and 509-522 (EPKA…LSPS). Ser583 bears the Phosphoserine mark. Thr586 is subject to Phosphothreonine. Residues 600 to 626 (LRLSQKAEEVYAQLQKMLQEQQAKCLL) are a coiled coil. The C2 domain occupies 666–805 (DPPSHHFELK…EKECEIREIM (140 aa)).

It belongs to the CC2D1 family. In terms of assembly, interacts with CHMP4B.

It is found in the nucleus. Transcription factor that binds specifically to the DRE (dual repressor element) and represses HTR1A gene transcription in neuronal cells. The polypeptide is Coiled-coil and C2 domain-containing protein 1B (Cc2d1b) (Mus musculus (Mouse)).